A 146-amino-acid polypeptide reads, in one-letter code: 3-dehydroquinate dehydratase (146 aa).

Y22 (proton acceptor) is an active-site residue. N74, H80, and D87 together coordinate substrate. Residue H100 is the Proton donor of the active site. Residues 101–102 and R111 each bind substrate; that span reads LS.

Belongs to the type-II 3-dehydroquinase family. In terms of assembly, homododecamer.

It catalyses the reaction 3-dehydroquinate = 3-dehydroshikimate + H2O. It functions in the pathway metabolic intermediate biosynthesis; chorismate biosynthesis; chorismate from D-erythrose 4-phosphate and phosphoenolpyruvate: step 3/7. Catalyzes a trans-dehydration via an enolate intermediate. This Clostridium beijerinckii (strain ATCC 51743 / NCIMB 8052) (Clostridium acetobutylicum) protein is 3-dehydroquinate dehydratase.